Reading from the N-terminus, the 491-residue chain is Probable protein phosphatase 2C 52 (491 aa).

The segment covering M1–E11 has biased composition (basic and acidic residues). The segment at M1–V211 is disordered. Residues S12–G54 are compositionally biased toward low complexity. Residues G66–A78 show a composition bias toward basic residues. Residues V95–Q105 show a composition bias toward acidic residues. Over residues V187–V211 the composition is skewed to basic and acidic residues. In terms of domain architecture, PPM-type phosphatase spans S229 to F475. The Mn(2+) site is built by D265, G266, D427, and D466.

Belongs to the PP2C family. Mg(2+) is required as a cofactor. The cofactor is Mn(2+).

The enzyme catalyses O-phospho-L-seryl-[protein] + H2O = L-seryl-[protein] + phosphate. The catalysed reaction is O-phospho-L-threonyl-[protein] + H2O = L-threonyl-[protein] + phosphate. This is Probable protein phosphatase 2C 52 from Oryza sativa subsp. japonica (Rice).